We begin with the raw amino-acid sequence, 197 residues long: ATP synthase subunit delta', mitochondrial (197 aa).

A mitochondrion-targeting transit peptide spans methionine 1–phenylalanine 19.

It belongs to the ATPase epsilon chain family. F-type ATPases have 2 components, CF(1) - the catalytic core - and CF(0) - the membrane proton channel. CF(1) has five subunits: alpha(3), beta(3), gamma(1), delta(1), epsilon(1). CF(0) has three main subunits: a, b and c.

Its subcellular location is the mitochondrion. It is found in the mitochondrion inner membrane. In terms of biological role, mitochondrial membrane ATP synthase (F(1)F(0) ATP synthase or Complex V) produces ATP from ADP in the presence of a proton gradient across the membrane which is generated by electron transport complexes of the respiratory chain. F-type ATPases consist of two structural domains, F(1) - containing the extramembraneous catalytic core, and F(0) - containing the membrane proton channel, linked together by a central stalk and a peripheral stalk. During catalysis, ATP turnover in the catalytic domain of F(1) is coupled via a rotary mechanism of the central stalk subunits to proton translocation. Part of the complex F(1) domain and of the central stalk which is part of the complex rotary element. Rotation of the central stalk against the surrounding alpha(3)beta(3) subunits leads to hydrolysis of ATP in three separate catalytic sites on the beta subunits. This chain is ATP synthase subunit delta', mitochondrial, found in Pisum sativum (Garden pea).